Consider the following 510-residue polypeptide: Glutamate decarboxylase (510 aa).

Glutamine 107–serine 109 lines the substrate pocket. Lysine 322 is subject to N6-(pyridoxal phosphate)lysine. Arginine 483 is a binding site for substrate.

It belongs to the group II decarboxylase family. Homodimer. Pyridoxal 5'-phosphate is required as a cofactor. In terms of tissue distribution, expressed in the head (at protein level).

The enzyme catalyses L-glutamate + H(+) = 4-aminobutanoate + CO2. Its function is as follows. Catalyzes the production of GABA. This is Glutamate decarboxylase (Gad1) from Drosophila melanogaster (Fruit fly).